A 110-amino-acid chain; its full sequence is V-type proton ATPase subunit G 1 (110 aa).

It belongs to the V-ATPase G subunit family. As to quaternary structure, V-ATPase is a heteromultimeric enzyme composed of a peripheral catalytic V1 complex (components A to H) attached to an integral membrane V0 proton pore complex (components: a, c, c', c'' and d).

Catalytic subunit of the peripheral V1 complex of vacuolar ATPase (V-ATPase). V-ATPase is responsible for acidifying a variety of intracellular compartments in eukaryotic cells. The chain is V-type proton ATPase subunit G 1 (VATG1) from Nicotiana tabacum (Common tobacco).